Consider the following 162-residue polypeptide: Nucleotide-binding protein ACIAD3137 (162 aa).

The protein belongs to the YajQ family.

Its function is as follows. Nucleotide-binding protein. The protein is Nucleotide-binding protein ACIAD3137 of Acinetobacter baylyi (strain ATCC 33305 / BD413 / ADP1).